The following is a 215-amino-acid chain: Late embryogenesis abundant protein 14 (215 aa).

Disordered stretches follow at residues 1–129 (MASQ…GQTG) and 190–215 (SGDN…SDYQ). Basic and acidic residues-rich tracts occupy residues 13 to 24 (GETKARAEEKTG), 32 to 41 (EKAREAKDTA), 54 to 81 (GAKE…KDAA), and 88 to 111 (AMDK…DRAA). A compositionally biased stretch (polar residues) spans 192–215 (DNKNNAAAGKDTSTYKPGTGSDYQ).

The protein belongs to the LEA type 4 family. In terms of tissue distribution, expressed in the shoot apex and leaves. Expressed in dry seeds. Expressed in roots and leaves.

It is found in the nucleus. The sequence is that of Late embryogenesis abundant protein 14 from Oryza sativa subsp. japonica (Rice).